The following is a 347-amino-acid chain: NADH-ubiquinone oxidoreductase chain 2 (347 aa).

The next 11 helical transmembrane spans lie at 3–23 (PVVL…VMTT), 25–45 (HWLL…PILM), 59–79 (YFLT…INLI), 96–116 (IIMT…FWVP), 122–142 (IQLS…MSIL), 149–169 (INLH…GWGG), 178–198 (IMAY…IYNP), 200–220 (MALL…MTFM), 237–257 (MPLL…LPPL), 274–294 (NSII…FFYM), and 325–345 (LLSP…MLAL).

The protein belongs to the complex I subunit 2 family. As to quaternary structure, core subunit of respiratory chain NADH dehydrogenase (Complex I) which is composed of 45 different subunits. Interacts with TMEM242.

Its subcellular location is the mitochondrion inner membrane. The enzyme catalyses a ubiquinone + NADH + 5 H(+)(in) = a ubiquinol + NAD(+) + 4 H(+)(out). Functionally, core subunit of the mitochondrial membrane respiratory chain NADH dehydrogenase (Complex I) which catalyzes electron transfer from NADH through the respiratory chain, using ubiquinone as an electron acceptor. Essential for the catalytic activity and assembly of complex I. This Paranyctimene raptor (Unstriped tube-nosed fruit bat) protein is NADH-ubiquinone oxidoreductase chain 2.